Here is a 477-residue protein sequence, read N- to C-terminus: UDP-N-acetylmuramate--L-alanine ligase (477 aa).

Residue 125–131 (GTHGKTT) participates in ATP binding.

The protein belongs to the MurCDEF family.

It localises to the cytoplasm. The catalysed reaction is UDP-N-acetyl-alpha-D-muramate + L-alanine + ATP = UDP-N-acetyl-alpha-D-muramoyl-L-alanine + ADP + phosphate + H(+). Its pathway is cell wall biogenesis; peptidoglycan biosynthesis. Its function is as follows. Cell wall formation. The polypeptide is UDP-N-acetylmuramate--L-alanine ligase (Acidothermus cellulolyticus (strain ATCC 43068 / DSM 8971 / 11B)).